An 876-amino-acid polypeptide reads, in one-letter code: Leucine--tRNA ligase (876 aa).

Residues 42–52 carry the 'HIGH' region motif; that stretch reads PYPSGKLHMGH. The 'KMSKS' region motif lies at 634 to 638; sequence KMSKS. Lys637 contributes to the ATP binding site.

It belongs to the class-I aminoacyl-tRNA synthetase family.

The protein resides in the cytoplasm. It catalyses the reaction tRNA(Leu) + L-leucine + ATP = L-leucyl-tRNA(Leu) + AMP + diphosphate. The protein is Leucine--tRNA ligase of Neisseria meningitidis serogroup C (strain 053442).